The sequence spans 181 residues: uncharacterized protein (181 aa).

The protein belongs to the isochorismatase family.

This is an uncharacterized protein from Bacillus subtilis (strain 168).